Consider the following 375-residue polypeptide: Growth/differentiation factor 8 (375 aa).

The signal sequence occupies residues 1–23 (MQKLAVYVYIYLFMLISVDPVAL). The propeptide occupies 24–266 (DDGSQPTENA…VTDTPKRSRR (243 aa)). A glycan (N-linked (GlcNAc...) asparagine) is linked at asparagine 71. Intrachain disulfides connect cysteine 272-cysteine 282, cysteine 281-cysteine 340, cysteine 309-cysteine 372, and cysteine 313-cysteine 374.

This sequence belongs to the TGF-beta family. Homodimer; disulfide-linked.

The protein localises to the secreted. Its function is as follows. Acts specifically as a negative regulator of skeletal muscle growth. This chain is Growth/differentiation factor 8 (MSTN), found in Anser anser anser (Western greylag goose).